A 58-amino-acid chain; its full sequence is Mu-diguetoxin-Dc1b (58 aa).

4 disulfides stabilise this stretch: cysteine 12–cysteine 26, cysteine 20–cysteine 40, cysteine 25–cysteine 54, and cysteine 42–cysteine 52.

This sequence belongs to the neurotoxin 26 (DTX) family. Expressed by the venom gland.

It localises to the secreted. Acts by delaying the inactivation of presynaptic voltage-sensitive sodium channels (Nav). Acts against insects and cause a progressive spastic paralysis. This Diguetia canities (Desert bush spider) protein is Mu-diguetoxin-Dc1b.